The sequence spans 130 residues: Fluoride-specific ion channel FluC (130 aa).

A run of 4 helical transmembrane segments spans residues 3–23 (FVFLWAALGGAIGSSLRYFVG), 38–58 (LGTFSVNIIGCFVIGFMGHLA), 67–87 (FGIFFVTGVLGGFTTFSSYGL), and 102–122 (ISYVLGTNLLGLIGVAIGWFL). Gly77 and Thr80 together coordinate Na(+).

It belongs to the fluoride channel Fluc/FEX (TC 1.A.43) family.

The protein resides in the cell inner membrane. The enzyme catalyses fluoride(in) = fluoride(out). Its activity is regulated as follows. Na(+) is not transported, but it plays an essential structural role and its presence is essential for fluoride channel function. Its function is as follows. Fluoride-specific ion channel. Important for reducing fluoride concentration in the cell, thus reducing its toxicity. This Helicobacter pylori (strain G27) protein is Fluoride-specific ion channel FluC.